The sequence spans 202 residues: MARQGTIHRVTGETDVKVRLDLDGSGQCQASTGVPFLDHMLHQISSHGLIDLEINAVGDTHIDDHHTNEDVGIAVGQALAQALGDRRGIHRFGHFVAPLDEALVQVALDCSGRPHLSYSLAIPSQRIGTYDTELVKEFFVAVVNNSGLTLHIRQLDGVNSHHIVEACFKAFARALRMATEVDPRRAGAIPSSKGVLEQAGAS.

The protein belongs to the imidazoleglycerol-phosphate dehydratase family.

Its subcellular location is the cytoplasm. It catalyses the reaction D-erythro-1-(imidazol-4-yl)glycerol 3-phosphate = 3-(imidazol-4-yl)-2-oxopropyl phosphate + H2O. It participates in amino-acid biosynthesis; L-histidine biosynthesis; L-histidine from 5-phospho-alpha-D-ribose 1-diphosphate: step 6/9. The chain is Imidazoleglycerol-phosphate dehydratase from Synechococcus sp. (strain CC9605).